Reading from the N-terminus, the 215-residue chain is Dual specificity phosphatase 29 (215 aa).

A Tyrosine-protein phosphatase domain is found at 53–201 (HVNEVWPRLH…LRELDKQLVK (149 aa)). 145 to 152 (HCAMGRSR) is a substrate binding site. Catalysis depends on C146, which acts as the Phosphocysteine intermediate.

Belongs to the protein-tyrosine phosphatase family. Non-receptor class dual specificity subfamily. Homodimer. Interacts with PRKAA2. In terms of tissue distribution, skeletal muscle, liver and adipose tissue.

The protein localises to the cytoplasm. The protein resides in the nucleus. It carries out the reaction O-phospho-L-tyrosyl-[protein] + H2O = L-tyrosyl-[protein] + phosphate. The enzyme catalyses O-phospho-L-seryl-[protein] + H2O = L-seryl-[protein] + phosphate. The catalysed reaction is O-phospho-L-threonyl-[protein] + H2O = L-threonyl-[protein] + phosphate. Dual specificity phosphatase able to dephosphorylate phosphotyrosine, phosphoserine and phosphothreonine residues within the same substrate, with a preference for phosphotyrosine as a substrate. Involved in the modulation of intracellular signaling cascades. In skeletal muscle regulates systemic glucose homeostasis by activating, AMPK, an energy sensor protein kinase. Affects MAP kinase signaling though modulation of the MAPK1/2 cascade in skeletal muscle promoting muscle cell differentiation, development and atrophy. This chain is Dual specificity phosphatase 29, found in Mus musculus (Mouse).